Reading from the N-terminus, the 61-residue chain is Short neurotoxin 1 (61 aa).

4 cysteine pairs are disulfide-bonded: cysteine 3–cysteine 23, cysteine 17–cysteine 40, cysteine 42–cysteine 53, and cysteine 54–cysteine 59.

Belongs to the three-finger toxin family. Short-chain subfamily. Type I alpha-neurotoxin sub-subfamily. As to expression, expressed by the venom gland.

The protein resides in the secreted. Its function is as follows. Binds to muscle nicotinic acetylcholine receptor (nAChR) and inhibit acetylcholine from binding to the receptor, thereby impairing neuromuscular transmission. The protein is Short neurotoxin 1 of Naja samarensis (Peters' cobra).